A 321-amino-acid polypeptide reads, in one-letter code: Peroxidase 70 (321 aa).

Residues 1 to 25 form the signal peptide; the sequence is MASSSFTSLSVMVLLCLAAAAVASA. Glutamine 26 is subject to Pyrrolidone carboxylic acid. Cystine bridges form between cysteine 36/cysteine 116, cysteine 69/cysteine 74, cysteine 122/cysteine 317, and cysteine 201/cysteine 226. The Proton acceptor role is filled by histidine 67. Positions 68, 71, 73, 75, and 77 each coordinate Ca(2+). A glycan (N-linked (GlcNAc...) asparagine) is linked at asparagine 81. Proline 164 is a binding site for substrate. A glycan (N-linked (GlcNAc...) asparagine) is linked at asparagine 172. Histidine 194 provides a ligand contact to heme b. Residue threonine 195 coordinates Ca(2+). Asparagine 210 carries an N-linked (GlcNAc...) asparagine glycan. Aspartate 241, threonine 244, and aspartate 249 together coordinate Ca(2+).

This sequence belongs to the peroxidase family. Classical plant (class III) peroxidase subfamily. The cofactor is heme b. It depends on Ca(2+) as a cofactor.

The protein localises to the secreted. The catalysed reaction is 2 a phenolic donor + H2O2 = 2 a phenolic radical donor + 2 H2O. Removal of H(2)O(2), oxidation of toxic reductants, biosynthesis and degradation of lignin, suberization, auxin catabolism, response to environmental stresses such as wounding, pathogen attack and oxidative stress. These functions might be dependent on each isozyme/isoform in each plant tissue. This Zea mays (Maize) protein is Peroxidase 70 (PER70).